We begin with the raw amino-acid sequence, 436 residues long: 3-ketoacyl-CoA thiolase (436 aa).

Cysteine 99 acts as the Acyl-thioester intermediate in catalysis. Catalysis depends on proton acceptor residues histidine 392 and cysteine 422.

Belongs to the thiolase-like superfamily. Thiolase family. Heterotetramer of two alpha chains (FadJ) and two beta chains (FadI).

Its subcellular location is the cytoplasm. It carries out the reaction an acyl-CoA + acetyl-CoA = a 3-oxoacyl-CoA + CoA. It participates in lipid metabolism; fatty acid beta-oxidation. Functionally, catalyzes the final step of fatty acid oxidation in which acetyl-CoA is released and the CoA ester of a fatty acid two carbons shorter is formed. The chain is 3-ketoacyl-CoA thiolase from Salmonella newport (strain SL254).